A 156-amino-acid polypeptide reads, in one-letter code: Gamma-L-glutamyl-butirosin B gamma-glutamyl cyclotransferase (156 aa).

24-27 (YGTL) contacts substrate. The active-site Proton acceptor is the Glu89.

It belongs to the gamma-glutamylcyclotransferase family.

The catalysed reaction is gamma-L-glutamyl-butirosin B = butirosin B + 5-oxo-L-proline. It functions in the pathway antibiotic biosynthesis; butirosin biosynthesis. Functionally, cyclotransferase that catalyzes the last step in the biosynthesis of the aminoglycoside antibiotic butirosin B. Cleaves the amide bond via transamidation using the alpha-amine of the terminal gamma-L-glutamate of the side chain, releasing it as the cyclic 5-oxoproline. The polypeptide is Gamma-L-glutamyl-butirosin B gamma-glutamyl cyclotransferase (btrG) (Niallia circulans (Bacillus circulans)).